Here is a 132-residue protein sequence, read N- to C-terminus: UPF0251 protein PTH_0588 (132 aa).

This sequence belongs to the UPF0251 family.

This chain is UPF0251 protein PTH_0588, found in Pelotomaculum thermopropionicum (strain DSM 13744 / JCM 10971 / SI).